Here is a 260-residue protein sequence, read N- to C-terminus: Snake venom serine protease homolog 2 (260 aa).

An N-terminal signal peptide occupies residues 1–18 (MVLIRVLANLLVLQLSYA). A propeptide spanning residues 19 to 24 (QKSSEL) is cleaved from the precursor. In terms of domain architecture, Peptidase S1 spans 25-251 (VIGGDECNIN…YTDWIQSIIA (227 aa)). Intrachain disulfides connect cysteine 31/cysteine 165, cysteine 52/cysteine 68, cysteine 100/cysteine 258, cysteine 144/cysteine 212, cysteine 176/cysteine 191, and cysteine 202/cysteine 227. A glycan (N-linked (GlcNAc...) asparagine) is linked at asparagine 123. The N-linked (GlcNAc...) asparagine glycan is linked to asparagine 253.

This sequence belongs to the peptidase S1 family. Snake venom subfamily. As to expression, expressed by the venom gland.

Its subcellular location is the secreted. Its function is as follows. Snake venom serine protease homolog that may act in the hemostasis system of the prey. The protein is Snake venom serine protease homolog 2 of Macrovipera lebetinus (Levantine viper).